The primary structure comprises 277 residues: Large ribosomal subunit protein uL2c (277 aa).

Disordered regions lie at residues 36–56 and 225–259; these read NKHS…HRGG and MNSV…GSKS.

This sequence belongs to the universal ribosomal protein uL2 family. As to quaternary structure, part of the 50S ribosomal subunit.

The protein localises to the plastid. It localises to the chloroplast. This Psilotum nudum (Whisk fern) protein is Large ribosomal subunit protein uL2c (rpl2).